The chain runs to 92 residues: Elongation factor 1-beta (92 aa).

The protein belongs to the EF-1-beta/EF-1-delta family.

Its function is as follows. Promotes the exchange of GDP for GTP in EF-1-alpha/GDP, thus allowing the regeneration of EF-1-alpha/GTP that could then be used to form the ternary complex EF-1-alpha/GTP/AAtRNA. This is Elongation factor 1-beta from Hyperthermus butylicus (strain DSM 5456 / JCM 9403 / PLM1-5).